The following is a 217-amino-acid chain: NADPH-dependent 3-demethoxyubiquinone 3-hydroxylase, mitochondrial (217 aa).

Repeat copies occupy residues 48–129 (AVDQ…TALL) and 130–217 (GKEG…SERF). The tract at residues 48 to 217 (AVDQIIRVDH…SAAIYLSERF (170 aa)) is 2 X approximate tandem repeats. Residues Glu-60, Glu-90, His-93, Glu-142, Glu-178, and His-181 each contribute to the Fe cation site. NADH contacts are provided by Tyr-212 and Arg-216.

Belongs to the COQ7 family. As to quaternary structure, component of a multi-subunit COQ enzyme complex. Interacts with COQ8B and COQ6. Interacts with COQ9. Fe cation is required as a cofactor.

The protein resides in the mitochondrion inner membrane. It carries out the reaction a 5-methoxy-2-methyl-3-(all-trans-polyprenyl)benzoquinone + NADH + O2 = a 3-demethylubiquinone + NAD(+) + H2O. Its pathway is cofactor biosynthesis; ubiquinone biosynthesis. Its function is as follows. Catalyzes the hydroxylation of the 5-methoxy-2-methyl-3-(all-trans-polyprenyl)benzoquinone at the C6 position and participates in the biosynthesis of ubiquinone. Catalyzes the reaction through a substrate-mediated reduction pathway, whereby NADH shuttles electrons to 5-methoxy-2-methyl-3-(all-trans-decaprenyl)benzoquinone, which then transfers the electrons to the two Fe(3+) centers. The binding of 5-methoxy-2-methyl-3-(all-trans-polyprenyl)benzoquinone (DMQn) mediates reduction of the diiron center by nicotinamide adenine dinucleotide (NADH) and initiates oxygen activation for subsequent DMQ hydroxylation. The physiological substrates are 5-methoxy-2-methyl-3-(all-trans-nonaprenyl)benzoquinone (DMQ(9)) and 5-methoxy-2-methyl-3-(all-trans-decaprenyl)benzoquinone (DMQ(10)), however in vitro the enzyme does not have any specificity concerning the length of the polyprenyl tail, and accepts tails of various lengths with similar efficiency. Also has a structural role in the COQ enzyme complex, stabilizing other COQ polypeptides. Involved in lifespan determination in a ubiquinone-independent manner. Plays a role in modulating mitochondrial stress responses, acting in the nucleus, perhaps via regulating gene expression, independent of its characterized mitochondrial function in ubiquinone biosynthesis. This is NADPH-dependent 3-demethoxyubiquinone 3-hydroxylase, mitochondrial from Rattus norvegicus (Rat).